The primary structure comprises 281 residues: tRNA dimethylallyltransferase (281 aa).

2 interaction with substrate tRNA regions span residues 13 to 16 and 133 to 137; these read DSAQ and QRITR.

The protein belongs to the IPP transferase family. As to quaternary structure, monomer. The cofactor is Mg(2+).

The enzyme catalyses adenosine(37) in tRNA + dimethylallyl diphosphate = N(6)-dimethylallyladenosine(37) in tRNA + diphosphate. Catalyzes the transfer of a dimethylallyl group onto the adenine at position 37 in tRNAs that read codons beginning with uridine, leading to the formation of N6-(dimethylallyl)adenosine (i(6)A). The protein is tRNA dimethylallyltransferase of Novosphingobium aromaticivorans (strain ATCC 700278 / DSM 12444 / CCUG 56034 / CIP 105152 / NBRC 16084 / F199).